The following is a 498-amino-acid chain: ATP synthase subunit beta, chloroplastic (498 aa).

172–179 (GGAGVGKT) contacts ATP.

The protein belongs to the ATPase alpha/beta chains family. F-type ATPases have 2 components, CF(1) - the catalytic core - and CF(0) - the membrane proton channel. CF(1) has five subunits: alpha(3), beta(3), gamma(1), delta(1), epsilon(1). CF(0) has four main subunits: a(1), b(1), b'(1) and c(9-12).

It localises to the plastid. It is found in the chloroplast thylakoid membrane. It carries out the reaction ATP + H2O + 4 H(+)(in) = ADP + phosphate + 5 H(+)(out). Its function is as follows. Produces ATP from ADP in the presence of a proton gradient across the membrane. The catalytic sites are hosted primarily by the beta subunits. The protein is ATP synthase subunit beta, chloroplastic of Spinacia oleracea (Spinach).